The chain runs to 125 residues: UPF0231 protein APP7_1023 (125 aa).

Belongs to the UPF0231 family.

This chain is UPF0231 protein APP7_1023, found in Actinobacillus pleuropneumoniae serotype 7 (strain AP76).